The chain runs to 478 residues: Septin-4 (478 aa).

The tract at residues 1–115 is disordered; that stretch reads MDRSLGWQGN…RSPWGKLDPY (115 aa). Over residues 13 to 26 the composition is skewed to basic and acidic residues; sequence PEDRTEAGIKRFLE. Residues 95–108 show a composition bias toward low complexity; the sequence is APAPLSPSARPRSP. Phosphoserine is present on residues Ser-117 and Ser-118. Positions 141–414 constitute a Septin-type G domain; sequence KGFDFTLMVA…ENYRAQCIQS (274 aa). The G1 motif stretch occupies residues 151-158; the sequence is GESGLGKS. Residues 151-158 and Thr-185 contribute to the GTP site; that span reads GESGLGKS. The tract at residues 208 to 211 is G3 motif; that stretch reads DTPG. The tract at residues 289–292 is G4 motif; that stretch reads AKAD. Position 290–298 (290–298) interacts with GTP; it reads KADTLTPPE. Ser-325 is subject to Phosphoserine. Gly-348 and Arg-363 together coordinate GTP. Residues 428–448 form a disordered region; it reads LTRESGTDFPIPAVPPGTDPE. Position 432 is a phosphoserine (Ser-432). Residue Thr-434 is modified to Phosphothreonine. Positions 447–478 form a coiled coil; that stretch reads PETEKLIREKDEELRRMQEMLHKIQKQMKENY.

This sequence belongs to the TRAFAC class TrmE-Era-EngA-EngB-Septin-like GTPase superfamily. Septin GTPase family. Septins polymerize into heterooligomeric protein complexes that form filaments, and can associate with cellular membranes, actin filaments and microtubules. GTPase activity is required for filament formation. Interacts with SEPTIN8. In a mesenchymal cell line, interacts with SEPTIN9 isoform 2 variants HNA Trp-106 and Phe-111, but not the wild type SEPTIN9. Component of a septin core octameric complex consisting of SEPTIN12, SEPTIN7, SEPTIN6 and SEPTIN2 or SEPTIN4 in the order 12-7-6-2-2-6-7-12 or 12-7-6-4-4-6-7-12. Interacts with SEPTIN14 (via C-terminus). Interacts with DYRK1A. Interacts with SLC6A3/DAT and SNCA/alpha-synuclein. Interacts with STX1A; in the striatum. Interacts with XIAP (via BIR3 domain) following the induction of apoptosis. Interacts with AREL1 (via HECT domain); in the cytoplasm following induction of apoptosis. As to quaternary structure, part of a complex composed of SEPTIN4 isoform ARTS, XIAP and BCL2, within the complex interacts with both BCL2 (via BH3 domain) and XIAP, ARTS acts as a scaffold protein and stabilizes the complex. Interacts with XIAP (via BIR3 domain) following the induction of apoptosis. Phosphorylated by DYRK1A. Post-translationally, ubiquitinated by AREL1. Widely expressed in adult and fetal tissues with highest expression in adult brain (at protein level), heart, liver and adrenal gland and fetal heart, kidney, liver and lung. Expressed in presynaptic terminals of dopaminergic neurons projecting from the substantia nigra pars compacta to the striatum (at protein level). Expressed in axonal varicosities in dopaminergic nerve terminals (at protein level). Expressed in the putamen and in the adjacent cerebral cortex (at protein level). Expressed in colonic crypts (at protein level). Also expressed in colorectal cancers and malignant melanomas. Expressed in platelets. As to expression, highly expressed in the brain and heart.

The protein resides in the cytoplasm. It is found in the cell projection. Its subcellular location is the cilium. The protein localises to the flagellum. It localises to the cytoplasmic vesicle. The protein resides in the secretory vesicle. It is found in the axon. Its subcellular location is the dendrite. The protein localises to the perikaryon. It localises to the synapse. The protein resides in the mitochondrion. It is found in the nucleus. Its function is as follows. Filament-forming cytoskeletal GTPase. Pro-apoptotic protein involved in LGR5-positive intestinal stem cell and Paneth cell expansion in the intestines, via its interaction with XIAP. May also play a role in the regulation of cell fate in the intestine. Positive regulator of apoptosis involved in hematopoietic stem cell homeostasis; via its interaction with XIAP. Negative regulator of repair and hair follicle regeneration in response to injury, due to inhibition of hair follicle stem cell proliferation, potentially via its interaction with XIAP. Plays an important role in male fertility and sperm motility. During spermiogenesis, essential for the establishment of the annulus (a fibrous ring structure connecting the midpiece and the principal piece of the sperm flagellum) which is a requisite for the structural and mechanical integrity of the sperm. Involved in the migration of cortical neurons and the formation of neuron leading processes during embryonic development. Required for dopaminergic metabolism in presynaptic autoreceptors; potentially via activity as a presynaptic scaffold protein. In terms of biological role, required for the induction of cell death mediated by TGF-beta and possibly by other apoptotic stimuli. Induces apoptosis through binding and inhibition of XIAP resulting in significant reduction in XIAP levels, leading to caspase activation and cell death. Mediates the interaction between BCL2 and XIAP, thereby positively regulating the ubiquitination and degradation of BCL2 and promoting apoptosis. The polypeptide is Septin-4 (Homo sapiens (Human)).